Consider the following 141-residue polypeptide: Myosin regulatory light chain cdc4 (141 aa).

Residues S2 and S6 each carry the phosphoserine modification. EF-hand domains follow at residues 3–38 (TDDSPYKQAFSLFDRHGTGRIPKTSIGDLLRACGQN), 74–109 (GDPEEFVKGFQVFDKDATGMIGVGELRYVLTSLGEK), and 109–141 (KLSNEEMDELLKGVPVKDGMVNYHDFVQMILAN). The Ca(2+) site is built by D87, D89, T91, M93, and E98.

As to quaternary structure, binds to myosin II chains myo2 and myo3. Interacts with vps27 and a PI 4-kinase pik1. Post-translationally, phosphorylated on either Ser-2 or Ser-6 but not both. Phosphorylation is not essential for the function of the protein.

It is found in the cytoplasm. Functionally, involved in cytokinesis. Required for the formation and function of the contractile ring. The polypeptide is Myosin regulatory light chain cdc4 (cdc4) (Schizosaccharomyces pombe (strain 972 / ATCC 24843) (Fission yeast)).